A 97-amino-acid polypeptide reads, in one-letter code: Large ribosomal subunit protein bL28 (97 aa).

The protein belongs to the bacterial ribosomal protein bL28 family.

The chain is Large ribosomal subunit protein bL28 from Rickettsia prowazekii (strain Madrid E).